Here is a 195-residue protein sequence, read N- to C-terminus: MQEPHDQEPIEKQKLPGMDDVLETEHSGTVAGNTERAGEDAAPSLEQQLKEAEIRAAEHHDAWLRAKAETENIRKRAQTDIASAHKYAIDNFSVQLLAVMDSLDAALATENSTLENLRDGVELTRKQLAAVFEKFNIHTIDPQGEKFDPHQHEAMCAVESDFAPNTVIQVMQKGYMLHDRVIRPAMVTVSKAKGT.

Positions 1–14 are enriched in basic and acidic residues; sequence MQEPHDQEPIEKQK. The interval 1–45 is disordered; it reads MQEPHDQEPIEKQKLPGMDDVLETEHSGTVAGNTERAGEDAAPSL.

The protein belongs to the GrpE family. As to quaternary structure, homodimer.

The protein localises to the cytoplasm. Functionally, participates actively in the response to hyperosmotic and heat shock by preventing the aggregation of stress-denatured proteins, in association with DnaK and GrpE. It is the nucleotide exchange factor for DnaK and may function as a thermosensor. Unfolded proteins bind initially to DnaJ; upon interaction with the DnaJ-bound protein, DnaK hydrolyzes its bound ATP, resulting in the formation of a stable complex. GrpE releases ADP from DnaK; ATP binding to DnaK triggers the release of the substrate protein, thus completing the reaction cycle. Several rounds of ATP-dependent interactions between DnaJ, DnaK and GrpE are required for fully efficient folding. The sequence is that of Protein GrpE from Nitrosomonas europaea (strain ATCC 19718 / CIP 103999 / KCTC 2705 / NBRC 14298).